The sequence spans 1875 residues: Nonribosomal peptide synthetase otaB (1875 aa).

An adenylation 1 region spans residues Gly-202–Ala-590. The Carrier domain occupies Ser-724–Gly-800. At Ser-761 the chain carries O-(pantetheine 4'-phosphoryl)serine. Residues Glu-836–Leu-1245 are condensation. Positions Gln-1264–Arg-1659 are adenylation 2.

It belongs to the NRP synthetase family.

It carries out the reaction 7-carboxymellein + L-phenylalanine + ATP = ochratoxin B + ADP + phosphate + H(+). It participates in mycotoxin biosynthesis. Its function is as follows. Nonribosomal peptide synthetase; part of the gene cluster that mediates the biosynthesis of ochratoxin A (OTA), a mycotoxin composed of a chlorinated type I polyketide dihydroisocoumarin moiety linked to L-phenylalanine, and demonstrated to have nephrotoxic, immunotoxic, genotoxic, neurotoxic, and teratogenic properties. OtaB is responsible for the linking of phenylalanine to the dihydroisocoumarin ring. The pathway begins with the highly reducing polyketide synthase otaA that catalyzes the formation of the isocoumarin group during the initial stages of biosynthesis, starting from one acetate and 4 malonate units, to originate the characteristic pentaketide skeleton 7-methylmellein (7-MM) of the OTA molecule. The newly identified cyclase otaY might be involved in the polyketide cyclization reaction during the initial steps of the OTA biosynthesis. 7-MM is then oxidized into 7-carboxymellein (also called ochratoxin beta) by the cytochrome P450 monooxygenase otaC. The NRPS encoded by the otaB gene is involved in the linking of phenylalanine to the dihydroisocoumarin ring. The reaction catalyzed by NRPS results in the production of ochratoxin B (OTB), which is the non-chlorinated analog of OTA and which subsequently serves as the substrate of the halogenase otaD for chlorination activity to form the final molecular structure of OTA, containing a chlorine atom in the C-5 position of the molecule. This is Nonribosomal peptide synthetase otaB from Aspergillus carbonarius (strain ITEM 5010).